A 127-amino-acid polypeptide reads, in one-letter code: Ribosome-binding factor A (127 aa).

Belongs to the RbfA family. Monomer. Binds 30S ribosomal subunits, but not 50S ribosomal subunits or 70S ribosomes.

The protein localises to the cytoplasm. One of several proteins that assist in the late maturation steps of the functional core of the 30S ribosomal subunit. Associates with free 30S ribosomal subunits (but not with 30S subunits that are part of 70S ribosomes or polysomes). Required for efficient processing of 16S rRNA. May interact with the 5'-terminal helix region of 16S rRNA. The polypeptide is Ribosome-binding factor A (Stenotrophomonas maltophilia (strain R551-3)).